The following is an 89-amino-acid chain: MKILLAIALMLSTVMWVSTQQPQEVHTYCGRHLARTMADLCWEEGVDKRSDAQFASYGSAWLMPYSAGRGIVDECCLRPCSVDVLLSYC.

Positions 1–19 are cleaved as a signal peptide; the sequence is MKILLAIALMLSTVMWVST. At Gln20 the chain carries Pyrrolidone carboxylic acid. Intrachain disulfides connect Cys29-Cys76, Cys41-Cys89, and Cys75-Cys80. Residues 50–68 constitute a propeptide, c peptide like; it reads SDAQFASYGSAWLMPYSAG.

It belongs to the insulin family. Heterodimer of a B chain and an A chain linked by two disulfide bonds.

Its subcellular location is the secreted. Functionally, brain peptide responsible for activation of prothoracic glands to produce ecdysone in insects. This is Bombyxin A-2 (BBXA2) from Bombyx mori (Silk moth).